A 182-amino-acid chain; its full sequence is Protein GrpE (182 aa).

Residues 1 to 37 (MSDSSKERKKKFTGMVNKQKSEDQQNNSKQADDLDEL) are disordered.

This sequence belongs to the GrpE family. Homodimer.

It is found in the cytoplasm. Functionally, participates actively in the response to hyperosmotic and heat shock by preventing the aggregation of stress-denatured proteins, in association with DnaK and GrpE. It is the nucleotide exchange factor for DnaK and may function as a thermosensor. Unfolded proteins bind initially to DnaJ; upon interaction with the DnaJ-bound protein, DnaK hydrolyzes its bound ATP, resulting in the formation of a stable complex. GrpE releases ADP from DnaK; ATP binding to DnaK triggers the release of the substrate protein, thus completing the reaction cycle. Several rounds of ATP-dependent interactions between DnaJ, DnaK and GrpE are required for fully efficient folding. In Wolbachia sp. subsp. Brugia malayi (strain TRS), this protein is Protein GrpE.